The following is a 506-amino-acid chain: Alpha-L-arabinofuranosidase B (506 aa).

A signal peptide spans 1–26 (MSSGLSLERACAVALGIVASASLVAA). Residues 27 to 343 (GPCDIYSSGG…ADIVAAKYAI (317 aa)) are catalytic. 3 cysteine pairs are disulfide-bonded: Cys-29–Cys-39, Cys-89–Cys-94, and Cys-184–Cys-185. Residue Asn-91 is glycosylated (N-linked (GlcNAc...) asparagine). Asp-227 provides a ligand contact to substrate. Glu-229 functions as the Nucleophile in the catalytic mechanism. Substrate contacts are provided by Asn-230 and Gly-304. The Proton donor role is filled by Asp-305. Residues 344–506 (ASLTSGPALT…VSWVVSTGFA (163 aa)) are ABD. A disulfide bridge links Cys-409 with Cys-447. Residues His-424, Asn-426, Phe-427, Asp-443, His-471, Glu-473, Leu-476, and Asp-496 each coordinate substrate.

This sequence belongs to the glycosyl hydrolase 54 family.

It is found in the secreted. The catalysed reaction is Hydrolysis of terminal non-reducing alpha-L-arabinofuranoside residues in alpha-L-arabinosides.. It participates in glycan metabolism; L-arabinan degradation. In terms of biological role, alpha-L-arabinofuranosidase involved in the degradation of arabinoxylan, a major component of plant hemicellulose. Able to hydrolyze 1,5-, 1,3- and 1,2-alpha-linkages not only in L-arabinofuranosyl oligosaccharides, but also in polysaccharides containing terminal non-reducing L-arabinofuranoses in side chains, like L-arabinan, arabinogalactan and arabinoxylan. The sequence is that of Alpha-L-arabinofuranosidase B (abfB) from Aspergillus oryzae (strain ATCC 42149 / RIB 40) (Yellow koji mold).